A 488-amino-acid chain; its full sequence is Protein nucleotidyltransferase YdiU (488 aa).

8 residues coordinate ATP: Gly-91, Gly-93, Arg-94, Lys-114, Asp-126, Gly-127, Arg-177, and Arg-184. Catalysis depends on Asp-253, which acts as the Proton acceptor. Positions 254 and 263 each coordinate Mg(2+). Asp-263 is an ATP binding site.

It belongs to the SELO family. It depends on Mg(2+) as a cofactor. The cofactor is Mn(2+).

It carries out the reaction L-seryl-[protein] + ATP = 3-O-(5'-adenylyl)-L-seryl-[protein] + diphosphate. The enzyme catalyses L-threonyl-[protein] + ATP = 3-O-(5'-adenylyl)-L-threonyl-[protein] + diphosphate. The catalysed reaction is L-tyrosyl-[protein] + ATP = O-(5'-adenylyl)-L-tyrosyl-[protein] + diphosphate. It catalyses the reaction L-histidyl-[protein] + UTP = N(tele)-(5'-uridylyl)-L-histidyl-[protein] + diphosphate. It carries out the reaction L-seryl-[protein] + UTP = O-(5'-uridylyl)-L-seryl-[protein] + diphosphate. The enzyme catalyses L-tyrosyl-[protein] + UTP = O-(5'-uridylyl)-L-tyrosyl-[protein] + diphosphate. In terms of biological role, nucleotidyltransferase involved in the post-translational modification of proteins. It can catalyze the addition of adenosine monophosphate (AMP) or uridine monophosphate (UMP) to a protein, resulting in modifications known as AMPylation and UMPylation. The chain is Protein nucleotidyltransferase YdiU from Bacillus thuringiensis (strain Al Hakam).